We begin with the raw amino-acid sequence, 271 residues long: Dermonecrotic toxin LarSicTox-alphaIB1c (271 aa).

H3 is an active-site residue. Residues E23 and D25 each contribute to the Mg(2+) site. Residue H39 is the Nucleophile of the active site. Intrachain disulfides connect C43–C49 and C45–C188. Residue D83 coordinates Mg(2+). Residue N248 is glycosylated (N-linked (GlcNAc...) asparagine).

This sequence belongs to the arthropod phospholipase D family. Class II subfamily. Mg(2+) serves as cofactor. Expressed by the venom gland.

It is found in the secreted. The catalysed reaction is an N-(acyl)-sphingosylphosphocholine = an N-(acyl)-sphingosyl-1,3-cyclic phosphate + choline. It catalyses the reaction an N-(acyl)-sphingosylphosphoethanolamine = an N-(acyl)-sphingosyl-1,3-cyclic phosphate + ethanolamine. The enzyme catalyses a 1-acyl-sn-glycero-3-phosphocholine = a 1-acyl-sn-glycero-2,3-cyclic phosphate + choline. It carries out the reaction a 1-acyl-sn-glycero-3-phosphoethanolamine = a 1-acyl-sn-glycero-2,3-cyclic phosphate + ethanolamine. Its function is as follows. Dermonecrotic toxins cleave the phosphodiester linkage between the phosphate and headgroup of certain phospholipids (sphingolipid and lysolipid substrates), forming an alcohol (often choline) and a cyclic phosphate. This toxin acts on sphingomyelin (SM). It may also act on ceramide phosphoethanolamine (CPE), lysophosphatidylcholine (LPC) and lysophosphatidylethanolamine (LPE), but not on lysophosphatidylserine (LPS), and lysophosphatidylglycerol (LPG). It acts by transphosphatidylation, releasing exclusively cyclic phosphate products as second products. Induces dermonecrosis, hemolysis, increased vascular permeability, edema, inflammatory response, and platelet aggregation. The polypeptide is Dermonecrotic toxin LarSicTox-alphaIB1c (Loxosceles arizonica (Arizona brown spider)).